We begin with the raw amino-acid sequence, 337 residues long: Mortality factor related protein 1 (337 aa).

In terms of domain architecture, Tudor-knot spans 7 to 55; the sequence is FEVGENVACIYKGKPYDAKITDIKTNSDGKELYCVHFKGWNNRYDEKIP. The tract at residues 75-113 is disordered; sequence HNAELPTTALKPKKKSLAAEAPRDDRDDTPGTSKGKKAK. Positions 122 to 327 constitute an MRG domain; the sequence is TADDMKVELP…ASNDYYRRSL (206 aa).

Component of the SIN3S complex, which contains at least sin-3, hda-1, athp-1 and mrg-1. Interacts with cfp-1, a component of the SET2 complex. Interacts with rfp-1. Expressed in oocytes (at protein level). Expressed mainly in germ cells, but also at lower levels in several somatic cell types, including intestinal cells.

It is found in the nucleus. It localises to the chromosome. Functionally, protein involved in the remodeling of chromatin thereby regulating various processes including transcription, chromosome synapsis and genome integrity. Mainly binds genomic loci carrying trimethylated histone H3 'Lys-36' (H3K36me3) or 'Lys-4' (H3K4me3), and acetylated histone H3 'Lys-9' (H3K9ac), 'Lys-27' (H3K27ac). During meiosis, required for the presynaptic pairing of homologous chromosomal regions outside of the pairing center and for the progression of chromosome synapsis. Essential maternal factor required in postembryonic germline development and in maintaining germ cell identity. Plays an important role in maintaining genomic integrity in primordial germ cells (PGCs) during meiosis by regulating DNA double-strand break (DSB) repair and synapsis. Also, required for chromatin-based transcriptional silencing in PGCs and for silencing of X-linked genes in the maternal germ line. By retaining histone acetyltransferase, cbp-1, in euchromatin, promotes the anchoring of heterochromatin at the inner nuclear membrane in intestinal and hypodermal cells. In Caenorhabditis elegans, this protein is Mortality factor related protein 1.